A 1007-amino-acid chain; its full sequence is Glutamate receptor ionotropic, delta-2 (1007 aa).

The first 23 residues, 1–23 (MEVFPFLLVLSVWWSRTWDSANA), serve as a signal peptide directing secretion. The segment at 24–345 (DSIIHIGAIF…NAFHKKLEDR (322 aa)) is interaction with CBLN1 homotrimer. Residues 24–566 (DSIIHIGAIF…DMFACLAPFD (543 aa)) lie on the Extracellular side of the membrane. 3 disulfide bridges follow: Cys83–Cys355, Cys99–Cys131, and Cys298–Cys310. Residue Asn293 is glycosylated (N-linked (GlcNAc...) asparagine). The N-linked (GlcNAc...) asparagine glycan is linked to Asn426. Ca(2+) is bound by residues Glu531, Val534, and Asp535. A helical membrane pass occupies residues 567-587 (LSLWACIAGTVLLVGLLVYLL). Residues 588–635 (NWLNPPRLQMGSMTSTTLYNSMWFVYGSFVQQGGEVPYTTLATRMMMG) lie on the Cytoplasmic side of the membrane. A helical transmembrane segment spans residues 636-656 (AWWLFALIVISSYTANLAAFL). Topologically, residues 657 to 830 (TITRIESSIQ…QKGGALDIKS (174 aa)) are extracellular. Asn713 and Asn716 each carry an N-linked (GlcNAc...) asparagine glycan. Ca(2+) contacts are provided by Asp753, Asp755, and Ser757. The chain crosses the membrane as a helical span at residues 831 to 851 (FAGVFCILAAGIVLSCFIAML). Topologically, residues 852–1007 (ETWWNKRKGS…GNDPDRGTSI (156 aa)) are cytoplasmic. Phosphoserine is present on Ser883. A Phosphothreonine modification is found at Thr886. A Phosphoserine modification is found at Ser890. Residues 921–991 (DFRNTHITTT…MSSIPYQPTP (71 aa)) are interaction with AP4M1. Positions 1005 to 1007 (TSI) match the PDZ-binding motif. Ser1006 is subject to Phosphoserine.

Belongs to the glutamate-gated ion channel (TC 1.A.10.1) family. GRID2 subfamily. As to quaternary structure, tetramer; dimer of dimers. Interacts with EML2, MAGI2 (via PDZ domains) and AP4M1. Interacts with BECN1, GOPC, GRID2IP, SHANK1 and SHANK2. Interacts with CBLN2, but not with CBLN4. Interacts with CBLN1 (via C1q domain); the interaction is CBLN1-NRX1 complex formation-dependent; CBLN1-binding is calcium-independent; CBLN1 hexamers anchor GRID2 N-terminal domain dimers to monomeric NRXN1 isoform beta; promotes synaptogenesis and mediates the D-Serine-dependent long term depression signals and AMPA receptor endocytosis.

Its subcellular location is the postsynaptic cell membrane. It catalyses the reaction Ca(2+)(in) = Ca(2+)(out). The enzyme catalyses Na(+)(in) = Na(+)(out). Its function is as follows. Member of the ionotropic glutamate receptor family, which plays a crucial role in synaptic organization and signal transduction in the central nervous system. Although it shares structural features with ionotropic glutamate receptors, does not bind glutamate as a primary ligand. Promotes synaptogenesis and mediates the D-Serine-dependent long term depression signals and AMPA receptor endocytosis of cerebellar parallel fiber-Purkinje cell (PF-PC) synapses through the NRX1B-CBLN1-GRID2 triad complex. In the presence of neurexins and cerebellins, forms cation-selective channels that are proposed to be gated by glycine and D-serine. However, recent research disputes this ligand-gated cation channel activity. Cation-selective ion channel activity can be triggered by GRM1 in Purkinje cells. The polypeptide is Glutamate receptor ionotropic, delta-2 (GRID2) (Homo sapiens (Human)).